The following is a 623-amino-acid chain: Hemagglutinin component HA-70 type D (623 aa).

As to quaternary structure, botulinum toxins are produced as large progenitor toxins of 12S (M toxin, about 280 kDa) and 16S (L toxin, about 650 kDa). M toxin consists of a non-toxic, non-hemagglutinin component (NTNHA) and the neurotoxin (BoNT/D). L toxin consists of the M toxin and the 3 hemagglutinin (HA) subcomponents of 70, 33, and 17 kDa. The stoichiometry of the whole complex has been modeled as one BoNT/D, one NTNHA, three HA-70, six HA-33 and three HA-17. HA-33 and HA-17 crystallize as a heterotrimer with two HA-33 and one HA-17. Limited treatment of L toxin with pepsin or trypsin produces shorter HA-70 proteins (called HA-55, HA-23 and HA-22) sometimes observed in vivo in other strains of type C and D botulinum toxin preparations.

The protein localises to the secreted. The hemagglutinin (HA) component of the progenitor toxin protects the structural integrity of the neurotoxin; may increase internalization of the neurotoxin into the bloodstream of the host. Involved in binding to the small intestine through interactions with glycolipids and glycoproteins containing sialic acid moieties. Erythrocyte agglutination only occurs when the entire complex is assembled. This HA subunit probably connects toxin/NTNHA to HA-33 and HA-17, the other components of the HA complex, and it may also protect the M toxin from proteolysis upon secretion. This is Hemagglutinin component HA-70 type D from Clostridium botulinum D phage (Clostridium botulinum D bacteriophage).